The primary structure comprises 100 residues: Urease subunit gamma (100 aa).

This sequence belongs to the urease gamma subunit family. Heterotrimer of UreA (gamma), UreB (beta) and UreC (alpha) subunits. Three heterotrimers associate to form the active enzyme.

The protein resides in the cytoplasm. The enzyme catalyses urea + 2 H2O + H(+) = hydrogencarbonate + 2 NH4(+). The protein operates within nitrogen metabolism; urea degradation; CO(2) and NH(3) from urea (urease route): step 1/1. This chain is Urease subunit gamma, found in Cupriavidus metallidurans (strain ATCC 43123 / DSM 2839 / NBRC 102507 / CH34) (Ralstonia metallidurans).